A 200-amino-acid polypeptide reads, in one-letter code: Probable molybdenum cofactor guanylyltransferase (200 aa).

GTP is bound by residues 9–11, Lys21, Asp69, and Asp100; that span reads LAG. Asp100 contributes to the Mg(2+) binding site.

Belongs to the MobA family. The cofactor is Mg(2+).

Its subcellular location is the cytoplasm. It catalyses the reaction Mo-molybdopterin + GTP + H(+) = Mo-molybdopterin guanine dinucleotide + diphosphate. Its function is as follows. Transfers a GMP moiety from GTP to Mo-molybdopterin (Mo-MPT) cofactor (Moco or molybdenum cofactor) to form Mo-molybdopterin guanine dinucleotide (Mo-MGD) cofactor. This is Probable molybdenum cofactor guanylyltransferase from Bacillus cereus (strain ATCC 10987 / NRS 248).